We begin with the raw amino-acid sequence, 236 residues long: MIDYTKTLTTTSKNKTFDEGLRRYMLKVYNYMALALLLTGVAAITTISVEPIYHLMFQTGFGTIIMFAPLGIALYFFMGFGRMNLQTAQILFWVYAGLTGMSLSYLALIYTGTSIARTFFICSSVFGAMSLYGYSTSRDLTSMGSFFAMGLIGLIIASLVNLFLKSSSLSFATSLIGIVVFMGLIAWDTQKIKSMYYIAGNDEVGQKLSIMAAFTLYLDFINLFLYLMRFLGNRRD.

Transmembrane regions (helical) follow at residues 32-52 (MALA…VEPI), 61-81 (FGTI…MGFG), 90-110 (ILFW…ALIY), 115-135 (IART…YGYS), 144-164 (GSFF…NLFL), 167-187 (SSLS…LIAW), and 208-228 (LSIM…LYLM).

Belongs to the BI1 family.

The protein localises to the cell membrane. This is an uncharacterized protein from Rickettsia prowazekii (strain Madrid E).